We begin with the raw amino-acid sequence, 412 residues long: Multifunctional CCA protein (412 aa).

ATP-binding residues include Gly8 and Arg11. The CTP site is built by Gly8 and Arg11. Residues Glu21 and Asp23 each contribute to the Mg(2+) site. 3 residues coordinate ATP: Arg91, Arg137, and Arg140. Positions 91, 137, and 140 each coordinate CTP. In terms of domain architecture, HD spans 228 to 329; it reads TGIHTLMTLA…LKLFNAIDVW (102 aa).

The protein belongs to the tRNA nucleotidyltransferase/poly(A) polymerase family. Bacterial CCA-adding enzyme type 1 subfamily. Monomer. Can also form homodimers and oligomers. The cofactor is Mg(2+). Ni(2+) is required as a cofactor.

The enzyme catalyses a tRNA precursor + 2 CTP + ATP = a tRNA with a 3' CCA end + 3 diphosphate. The catalysed reaction is a tRNA with a 3' CCA end + 2 CTP + ATP = a tRNA with a 3' CCACCA end + 3 diphosphate. Catalyzes the addition and repair of the essential 3'-terminal CCA sequence in tRNAs without using a nucleic acid template. Adds these three nucleotides in the order of C, C, and A to the tRNA nucleotide-73, using CTP and ATP as substrates and producing inorganic pyrophosphate. tRNA 3'-terminal CCA addition is required both for tRNA processing and repair. Also involved in tRNA surveillance by mediating tandem CCA addition to generate a CCACCA at the 3' terminus of unstable tRNAs. While stable tRNAs receive only 3'-terminal CCA, unstable tRNAs are marked with CCACCA and rapidly degraded. This Yersinia pestis protein is Multifunctional CCA protein.